Here is a 490-residue protein sequence, read N- to C-terminus: Glucose-6-phosphate 1-dehydrogenase (490 aa).

NADP(+)-binding positions include Arg-48, 90-91 (DI), and Lys-145. Positions 175, 179, 213, and 232 each coordinate substrate. His-237 functions as the Proton acceptor in the catalytic mechanism. Substrate-binding residues include Lys-340 and Lys-345.

The protein belongs to the glucose-6-phosphate dehydrogenase family.

The catalysed reaction is D-glucose 6-phosphate + NADP(+) = 6-phospho-D-glucono-1,5-lactone + NADPH + H(+). The protein operates within carbohydrate degradation; pentose phosphate pathway; D-ribulose 5-phosphate from D-glucose 6-phosphate (oxidative stage): step 1/3. In terms of biological role, catalyzes the oxidation of glucose 6-phosphate to 6-phosphogluconolactone. This Buchnera aphidicola subsp. Baizongia pistaciae (strain Bp) protein is Glucose-6-phosphate 1-dehydrogenase.